Here is a 267-residue protein sequence, read N- to C-terminus: Orotidine 5'-phosphate decarboxylase (267 aa).

The Proton donor role is filled by Lys-93.

It belongs to the OMP decarboxylase family. Type 2 subfamily.

The catalysed reaction is orotidine 5'-phosphate + H(+) = UMP + CO2. The protein operates within pyrimidine metabolism; UMP biosynthesis via de novo pathway; UMP from orotate: step 2/2. The protein is Orotidine 5'-phosphate decarboxylase of Halobacterium salinarum (strain ATCC 29341 / DSM 671 / R1).